Reading from the N-terminus, the 569-residue chain is GATOR1 complex protein NPRL3 (569 aa).

Disordered stretches follow at residues 27 to 60 (PFQR…DQDG) and 441 to 476 (TPNA…SGDS). 2 stretches are compositionally biased toward polar residues: residues 34–52 (HPAS…NNTG) and 441–468 (TPNA…NSSA). At S476 the chain carries Phosphoserine.

This sequence belongs to the NPR3 family. As to quaternary structure, within the GATOR complex, component of the GATOR1 subcomplex, made of DEPDC5, NPRL2 and NPRL3. GATOR1 mediates the strong interaction of the GATOR complex with small GTPases Rag (RagA/RRAGA, RagB/RRAGB, RagC/RRAGC and/or RagD/RRAGD) heterodimers. GATOR1 interacts with GPR155/LYCHOS; interaction takes place in presence of cholesterol and prevents interaction between GATOR1 and KICSTOR.

It is found in the lysosome membrane. In terms of biological role, as a component of the GATOR1 complex functions as an inhibitor of the amino acid-sensing branch of the mTORC1 pathway. In response to amino acid depletion, the GATOR1 complex has GTPase activating protein (GAP) activity and strongly increases GTP hydrolysis by RagA/RRAGA (or RagB/RRAGB) within heterodimeric Rag complexes, thereby turning them into their inactive GDP-bound form, releasing mTORC1 from lysosomal surface and inhibiting mTORC1 signaling. In the presence of abundant amino acids, the GATOR1 complex is negatively regulated by GATOR2, the other GATOR subcomplex, in this amino acid-sensing branch of the TORC1 pathway. The protein is GATOR1 complex protein NPRL3 of Mus musculus (Mouse).